A 762-amino-acid chain; its full sequence is Transcription factor kpeA (762 aa).

The segment at 267-361 (FDHTSHGSQS…PLKPDQRKQA (95 aa)) is disordered. A compositionally biased stretch (low complexity) spans 294-312 (KKPSSPTRSTGSSSSTSPP). Residues 370–401 (CLRCKFLKKTCDKGEPCAGCQPSHARLWQVPC) constitute a DNA-binding region (zn(2)-C6 fungal-type).

It is found in the nucleus. Transcription factor that regulates conidiation as well as kojic acid production, likely by negatively controlling kojR and kojA expression. This is Transcription factor kpeA from Aspergillus oryzae (strain ATCC 42149 / RIB 40) (Yellow koji mold).